Reading from the N-terminus, the 133-residue chain is ATP synthase epsilon chain, chloroplastic (133 aa).

Belongs to the ATPase epsilon chain family. In terms of assembly, F-type ATPases have 2 components, CF(1) - the catalytic core - and CF(0) - the membrane proton channel. CF(1) has five subunits: alpha(3), beta(3), gamma(1), delta(1), epsilon(1). CF(0) has three main subunits: a, b and c.

It localises to the plastid. Its subcellular location is the chloroplast thylakoid membrane. In terms of biological role, produces ATP from ADP in the presence of a proton gradient across the membrane. The protein is ATP synthase epsilon chain, chloroplastic of Solanum lycopersicum (Tomato).